A 356-amino-acid chain; its full sequence is Staphylococcal superantigen-like 3 (356 aa).

The first 30 residues, 1-30 (MKMRTIAKTSLALGLLTTGAITVTTQSVKA), serve as a signal peptide directing secretion. Positions 61–165 (ATTQAANTRQ…TIKQAQTDMT (105 aa)) are disordered. Residues 69–104 (RQERTPKLEKAPNTNEEKTSASKIEKISQPKQEEQK) show a composition bias toward basic and acidic residues. Residues 114 to 141 (PKQEQSQTTTESTTPKTKVTTPPSTNTP) show a composition bias toward low complexity. The segment covering 142-164 (QPMQSTKSDTPQSPTIKQAQTDM) has biased composition (polar residues). Positions 228–326 (IDVFIVLEDN…VIKMKNGGKY (99 aa)) are sialyl Lewis X-binding.

Belongs to the staphylococcal/streptococcal toxin family. Interacts with host TLR2 (via its extracellular domain).

The protein localises to the secreted. Secreted protein that plays an essential role in immune innate response inhibition by interacting with and inhibiting host TLR2. In turn, bacteria recognition by immune cells is impaired and cytokine production is inhibited. Mechanistically, by interacting with TLR2, blocks ligand binding and thus inhibits activation. Second, by interacting with an already formed TLR2-lipopeptide complex, prevents TLR heterodimerization and downstream signaling. The interaction with host TLR2 does not involve sialyl Lewis X interactions. The polypeptide is Staphylococcal superantigen-like 3 (Staphylococcus aureus (strain NCTC 8325 / PS 47)).